Reading from the N-terminus, the 233-residue chain is Ribonuclease HII (233 aa).

The RNase H type-2 domain maps to 21–211 (KIIAGVDEVG…LDALPQWRHL (191 aa)). The a divalent metal cation site is built by Asp27, Glu28, and Asp119.

The protein belongs to the RNase HII family. Mn(2+) is required as a cofactor. Requires Mg(2+) as cofactor.

Its subcellular location is the cytoplasm. The enzyme catalyses Endonucleolytic cleavage to 5'-phosphomonoester.. Endonuclease that specifically degrades the RNA of RNA-DNA hybrids. This Streptomyces coelicolor (strain ATCC BAA-471 / A3(2) / M145) protein is Ribonuclease HII (rnhB).